The chain runs to 764 residues: MSTRATRPGMLHQKENAADAQAGKRQRTAAGSAARAPLSANAAPPAPDPAIEFAGRDDVDALLNEKMKGKNKMDYKGKSEQMMEYIKKLRACIKWLLEREDTNLAEIGKLNGLLEAAEKHHSEIVAQLKSAIEESKAINEELQRQYASLEENLKRVEAEKLDALRSYGDEKEARIAVEASRNEHLEDLRRIKLEEKRLNDQIKMLQDTNKRLQEYNTSLQQYNSNLQADATKNGETIAKLQKEKNTMVETMNGLKDHANSVKMQLDLAKSSQNEALKQKTDLLKEVDNLRGELQQVRDDRDHKLAEIHSLLADVSTYKEMTGKSVAELDNAMTRSTALEETCSSQAERIKTLELQLASANEKLKRSDLTTMETMTEYEKQKRMLEDLQLRLEEAEQQILDGENLRKRLHNTILELKGNIRVFCRVRPLLPNESGAVAYPKSGENLGRGIELTHNAQMYSFTFDKVFEQSASQEDVFIEISQLIQSALDGYKVCIFAYGQTGSGKTYTMMGNPELHDQKGLIPRSLEQIFQTSQALISQGWKYKMQASMLEIYNEAIRDLLATNRTTVQDGGASKYSIKHDANGNTHVSDLTIVDVSSINEVSSLLKRAAQSRSVGRTQMNEESSRSHCVFTLRIFGVNEGTDQQVQGVLNLIDLAGSERLNKSGATGDRLKETQAINKSLSCLSDVIFSIAKKEEHVPFRNSKLTYLLQPCLGGDSKTLMFVNLSPEVSSTGESICSLRFAARVNSCEIGIPRRQTQVRSLAQG.

The disordered stretch occupies residues 1–50; sequence MSTRATRPGMLHQKENAADAQAGKRQRTAAGSAARAPLSANAAPPAPDPA. The segment covering 29–50 has biased composition (low complexity); the sequence is AAGSAARAPLSANAAPPAPDPA. The stretch at 105–416 forms a coiled coil; that stretch reads AEIGKLNGLL…RLHNTILELK (312 aa). The 330-residue stretch at 418–747 folds into the Kinesin motor domain; it reads NIRVFCRVRP…LRFAARVNSC (330 aa). Residue 498-505 coordinates ATP; that stretch reads GQTGSGKT.

This sequence belongs to the TRAFAC class myosin-kinesin ATPase superfamily. Kinesin family. KIN-14 subfamily.

The polypeptide is Kinesin-like protein KIN-14N (Oryza sativa subsp. japonica (Rice)).